We begin with the raw amino-acid sequence, 250 residues long: Kv channel-interacting protein 4 (250 aa).

Residues 2-44 (NVRRVESISAQLEEASSTGGFLYTQNSTKRSIKERLMKLLPCS) are KIS. Phosphoserine is present on residues S17 and S56. In terms of domain architecture, EF-hand 1; degenerate spans 61 to 117 (LEMATVRHRPEALELLEAQSKFTKKELQILYRGFKNECPSGVVNEDTFKEIYSQFFP). EF-hand domains follow at residues 120-155 (DSTT…LLRG), 156-191 (TVQE…IYDM), and 204-239 (APRQ…DENI). Residues D133, D135, N137, D144, D169, N171, D173, Y175, E180, D217, N219, D221, and E228 each contribute to the Ca(2+) site. Positions 237–250 (ENIMRSMQLFENVI) are interaction with KCND2.

Belongs to the recoverin family. In terms of assembly, component of heteromultimeric potassium channels. Identified in potassium channel complexes containing KCND1, KCND2, KCND3, KCNIP1, KCNIP2, KCNIP3, KCNIP4, DPP6 and DPP10. Interacts with KCND2. Interacts with KCND3. Interacts with the C-terminus of PSEN2 and probably PSEN1.

It localises to the cell membrane. It is found in the cytoplasm. The protein resides in the peroxisome. Regulatory subunit of Kv4/D (Shal)-type voltage-gated rapidly inactivating A-type potassium channels. Modulates KCND2 channel density, inactivation kinetics and rate of recovery from inactivation in a calcium-dependent and isoform-specific manner. Modulates KCND3/Kv4.3 currents. Isoform 4 does not increase KCND2 expression at the cell membrane. Isoform 4 retains KCND3 in the endoplasmic reticulum and negatively regulates its expression at the cell membrane. The polypeptide is Kv channel-interacting protein 4 (KCNIP4) (Bos taurus (Bovine)).